Here is a 410-residue protein sequence, read N- to C-terminus: Cysteine desulfurase IscS (410 aa).

Pyridoxal 5'-phosphate is bound by residues 80–81 (AT), N160, Q188, and 208–210 (SGH). K211 bears the N6-(pyridoxal phosphate)lysine mark. T248 provides a ligand contact to pyridoxal 5'-phosphate. The active-site Cysteine persulfide intermediate is C334. Residue C334 participates in [2Fe-2S] cluster binding.

This sequence belongs to the class-V pyridoxal-phosphate-dependent aminotransferase family. NifS/IscS subfamily. As to quaternary structure, homodimer. Forms a heterotetramer with IscU, interacts with other sulfur acceptors. Requires pyridoxal 5'-phosphate as cofactor.

The protein resides in the cytoplasm. The catalysed reaction is (sulfur carrier)-H + L-cysteine = (sulfur carrier)-SH + L-alanine. Its pathway is cofactor biosynthesis; iron-sulfur cluster biosynthesis. In terms of biological role, master enzyme that delivers sulfur to a number of partners involved in Fe-S cluster assembly, tRNA modification or cofactor biosynthesis. Catalyzes the removal of elemental sulfur atoms from cysteine to produce alanine. Functions as a sulfur delivery protein for Fe-S cluster synthesis onto IscU, an Fe-S scaffold assembly protein, as well as other S acceptor proteins. This chain is Cysteine desulfurase IscS, found in Rickettsia rickettsii (strain Iowa).